A 460-amino-acid chain; its full sequence is Piperamide synthase (460 aa).

The interval 1–23 (MASSQLEFNVERKQPELLGPAEP) is disordered. Residues histidine 168 and aspartate 383 each act as proton acceptor in the active site. A Microbody targeting signal motif is present at residues 458-460 (SRM).

This sequence belongs to the plant acyltransferase family. In terms of assembly, monomer. As to expression, confined to immature fruits perisperm. Also detectable in roots.

Its subcellular location is the cytoplasm. The enzyme catalyses piperidine + (E,E)-piperoyl-CoA = piperine + CoA + H(+). It participates in aromatic compound metabolism. Functionally, involved in the biosynthesis of aromatic piperamides natural products such as piperine (1-piperoyl-piperidine), the pungent principle contributing, together with several terpenoids, to the aromatic properties of black pepper fruits, and displaying numerous pharmacological activities such as antiproliferative, antitumor, antiangiogenesis, antioxidant, antidiabetic, antiobesity, cardioprotective, antimicrobial, antiaging, and immunomodulatory effects. Can use piperidine and benzylamine as acceptors and various CoA-esters with aliphatic and aromatic amines as CoA-donors, including piperoyl-CoA, hexanoyl-CoA and octanoyl-CoA, and, to a lower extent, benzoyl-CoA. Mediates the conversion of piperidine to three piperine isomers in the presence of piperoyl-CoA. Its ability to convert in vitro piperidine to hexanoylpiperidine in the presence of hexanoyl-CoA, and to octanoylpiperidine in the presence of octanoyl-CoA is not confirmed in vivo according to fruits metabolome analysis. This is Piperamide synthase from Piper nigrum (Black pepper).